A 609-amino-acid polypeptide reads, in one-letter code: Neutral protease (609 aa).

Residues 1 to 24 form the signal peptide; it reads MNKTQRHINWLLAVSAATALPVTA. Residues 25–196 constitute a propeptide that is removed on maturation; sequence AEMINVNDGS…VLQTWDGLNH (172 aa). Histidine 343 serves as a coordination point for Zn(2+). The active site involves glutamate 344. The Zn(2+) site is built by histidine 347 and glutamate 367. Residue histidine 426 is the Proton donor of the active site.

This sequence belongs to the peptidase M4 family. Zn(2+) is required as a cofactor.

It localises to the secreted. It carries out the reaction Preferential cleavage of bonds with bulky hydrophobic groups in P2 and P1'. Phe at P1' is the most favored residue, which distinguished this enzyme from thermolysin.. Extracellular zinc metalloprotease. In Vibrio proteolyticus (Aeromonas proteolytica), this protein is Neutral protease (nprV).